The primary structure comprises 1544 residues: Arf-GAP with Rho-GAP domain, ANK repeat and PH domain-containing protein 3 (1544 aa).

The SAM domain maps to 4–68 (PQDLDIAVWL…LRLLQTGTEE (65 aa)). Disordered stretches follow at residues 64–147 (TGTE…EQSS) and 167–194 (GRAQ…PTTG). Composition is skewed to pro residues over residues 82 to 97 (SPSP…PVPK) and 130 to 139 (EPSPRPPPLP). PH domains are found at residues 287–379 (TPLL…SCLK) and 394–483 (RPLR…EAVT). The region spanning 480 to 611 (EAVTETLSDY…LFRKPHPQYP (132 aa)) is the Arf-GAP domain. The C4-type zinc-finger motif lies at 504–527 (CADCGSSRPDWAAVNLGVVICKQC). The 182-residue stretch at 907–1088 (TGLQEQQMSR…ELIDGYISVF (182 aa)) folds into the Rho-GAP domain. The 94-residue stretch at 1117–1210 (GDLIMEVYIE…ASLLLKKVPL (94 aa)) folds into the Ras-associating domain. The PH 3 domain occupies 1223–1325 (ESPRVGLLRC…WTTSILKAQH (103 aa)). Thr-1348 is modified (phosphothreonine). A phosphotyrosine mark is found at Tyr-1403 and Tyr-1408. The interval 1422–1544 (STSFSTTREW…SSPPSSQPLT (123 aa)) is disordered. Residues 1438 to 1457 (PLTSQKSLDQPFLSKSSTLG) show a composition bias toward polar residues. Residues Ser-1444 and Ser-1480 each carry the phosphoserine modification. Low complexity-rich tracts occupy residues 1482–1492 (EEQLLQELSSL) and 1502–1527 (GLGS…TPGF).

As to quaternary structure, interacts (via SAM domain) with INPPL1/SHIP2. Tyrosine phosphorylated at a low basal level. PDGF treatment stimulates phosphorylation. Tyrosine phosphorylation is increased in cells that are in the process of becoming attached to a substrate and that start spreading and flattening.

It localises to the cytoplasm. Its subcellular location is the cytoskeleton. It is found in the cell membrane. The protein resides in the cell projection. The protein localises to the lamellipodium. It localises to the ruffle. Phosphatidylinositol 3,4,5-trisphosphate-dependent GTPase-activating protein that modulates actin cytoskeleton remodeling by regulating ARF and RHO family members. Is activated by phosphatidylinositol 3,4,5-trisphosphate (PtdIns(3,4,5)P3) binding. Can be activated by phosphatidylinositol 3,4-bisphosphate (PtdIns(3,4,5)P2) binding, albeit with lower efficiency. Acts on ARF6, RAC1, RHOA and CDC42. Plays a role in the internalization of anthrax toxin. In Homo sapiens (Human), this protein is Arf-GAP with Rho-GAP domain, ANK repeat and PH domain-containing protein 3 (ARAP3).